Consider the following 910-residue polypeptide: DNA mismatch repair protein MutS (910 aa).

Residues 1 to 11 show a composition bias toward basic and acidic residues; it reads MEAKVEEKEPE. The segment at 1-21 is disordered; the sequence is MEAKVEEKEPEPVENAGPDAP. 658–665 lines the ATP pocket; it reads GPNMGGKS.

This sequence belongs to the DNA mismatch repair MutS family.

This protein is involved in the repair of mismatches in DNA. It is possible that it carries out the mismatch recognition step. This protein has a weak ATPase activity. The protein is DNA mismatch repair protein MutS of Brucella canis (strain ATCC 23365 / NCTC 10854 / RM-666).